A 192-amino-acid chain; its full sequence is Ribonuclease HII (192 aa).

The 186-residue stretch at 2 to 187 (KNLCGIDEAG…KALGENEIGV (186 aa)) folds into the RNase H type-2 domain. A divalent metal cation-binding residues include D8, E9, and D97.

Belongs to the RNase HII family. Mn(2+) serves as cofactor. Mg(2+) is required as a cofactor.

The protein localises to the cytoplasm. The catalysed reaction is Endonucleolytic cleavage to 5'-phosphomonoester.. In terms of biological role, endonuclease that specifically degrades the RNA of RNA-DNA hybrids. The protein is Ribonuclease HII of Aliarcobacter butzleri (strain RM4018) (Arcobacter butzleri).